A 589-amino-acid polypeptide reads, in one-letter code: Aspartate--tRNA ligase (589 aa).

Residue E175 coordinates L-aspartate. The aspartate stretch occupies residues 199 to 202 (QIFK). R221 is an L-aspartate binding site. Residues 221 to 223 (RDE) and Q230 contribute to the ATP site. H449 lines the L-aspartate pocket. E483 contacts ATP. Position 490 (R490) interacts with L-aspartate. 535–538 (GLDR) serves as a coordination point for ATP.

This sequence belongs to the class-II aminoacyl-tRNA synthetase family. Type 1 subfamily. Homodimer.

Its subcellular location is the cytoplasm. It carries out the reaction tRNA(Asp) + L-aspartate + ATP = L-aspartyl-tRNA(Asp) + AMP + diphosphate. Catalyzes the attachment of L-aspartate to tRNA(Asp) in a two-step reaction: L-aspartate is first activated by ATP to form Asp-AMP and then transferred to the acceptor end of tRNA(Asp). This is Aspartate--tRNA ligase from Shouchella clausii (strain KSM-K16) (Alkalihalobacillus clausii).